The chain runs to 1123 residues: Ubiquitin carboxyl-terminal hydrolase 36 (1123 aa).

Basic and acidic residues-rich tracts occupy residues 1-19 (MPIV…KDSA) and 69-90 (GASR…EHTY). 2 disordered regions span residues 1 to 22 (MPIV…ADDG) and 67 to 95 (TEGA…SCGD). The USP domain occupies 122 to 423 (AGLHNLGNTC…QAYVLFYLRI (302 aa)). Cys-131 (nucleophile) is an active-site residue. The active-site Proton acceptor is His-382. A phosphoserine mark is found at Ser-429 and Ser-464. The interval 430–577 (PEGLISRTGS…RQGSWDSRDV (148 aa)) is disordered. The segment covering 491–503 (RNGSTLGLKSQNG) has biased composition (polar residues). Positions 510-519 (PSGSPSPKLS) are enriched in low complexity. Ser-546 carries the post-translational modification Phosphoserine. A compositionally biased stretch (low complexity) spans 557-571 (SNSNSSRSGSQRQGS). Ser-582 carries the phosphoserine modification. Residues 589-999 (ATANGHGLKG…ESSSCAPSAN (411 aa)) are disordered. Residues 597 to 609 (KGNDESAGLDRRG) are compositionally biased toward basic and acidic residues. The segment covering 610–623 (SSSSSPEHSASSDS) has biased composition (low complexity). The segment covering 640–654 (SQETNCSTAGHSKTP) has biased composition (polar residues). At Ser-667 the chain carries Phosphoserine. The span at 669–681 (VLSNTTTEPASTM) shows a compositional bias: polar residues. The residue at position 682 (Ser-682) is a Phosphoserine. Low complexity predominate over residues 687-697 (KKLALSAKKAS). A phosphoserine mark is found at Ser-713 and Ser-742. Over residues 773–785 (EPRSCSSISTALP) the composition is skewed to polar residues. Over residues 841–850 (HGKRKRKKKK) the composition is skewed to basic residues. The segment covering 891–902 (GTQPQVNGQQVG) has biased composition (polar residues). A Phosphoserine modification is found at Ser-952. The span at 963-975 (QETQRAVEEDGHL) shows a compositional bias: basic and acidic residues.

The protein belongs to the peptidase C19 family. In terms of assembly, interacts with isoform 3 of FBXW7; the interaction inhibits MYC degradation induced by SCF(FBW7) complex. Interacts with NTRK1; USP36 does not deubiquitinate NTRK1. Interacts with NEDD4L (via domains WW1, 3 and 4); the interaction inhibits ubiquitination of, at least, NTRK1, KCNQ2 and KCNQ3 by NEDD4L. Interacts (via C-terminus) with EXOSC10 (via C-terminus); the interaction is facilitated by the association with RNA and promotes sumoylation of EXOSC10. Polyubiquitinated by NEDD4L, no effect on USP36 protein levels. Both proteins interact with and regulate each other's ubiquitination levels. As to expression, broadly expressed.

Its subcellular location is the nucleus. The protein localises to the nucleolus. It localises to the cytoplasm. The enzyme catalyses Thiol-dependent hydrolysis of ester, thioester, amide, peptide and isopeptide bonds formed by the C-terminal Gly of ubiquitin (a 76-residue protein attached to proteins as an intracellular targeting signal).. Its function is as follows. Deubiquitinase essential for the regulation of nucleolar structure and function. Required for cell and organism viability. Plays an important role in ribosomal RNA processing and protein synthesis, which is mediated, at least in part, through deubiquitination of DHX33, NPM1 and FBL, regulating their protein stability. Functions as a transcriptional repressor by deubiquiting histone H2B at the promoters of genes critical for cellular differentiation, such as CDKN1A, thereby preventing histone H3 'Lys-4' trimethylation (H3K4). Specifically deubiquitinates MYC in the nucleolus, leading to prevent MYC degradation by the proteasome: acts by specifically interacting with isoform 3 of FBXW7 (FBW7gamma) in the nucleolus and counteracting ubiquitination of MYC by the SCF(FBW7) complex. In contrast, it does not interact with isoform 1 of FBXW7 (FBW7alpha) in the nucleoplasm. Interacts to and regulates the actions of E3 ubiquitin-protein ligase NEDD4L over substrates such as NTRK1, KCNQ2 and KCNQ3, affecting their expression an functions. Deubiquitinates SOD2, regulates SOD2 protein stability. Deubiquitinase activity is required to control selective autophagy activation by ubiquitinated proteins. Promotes CEP63 stabilization through 'Lys-48'-linked deubiquitination leading to increased stability. Acts as a SUMO ligase to promote EXOSC10 sumoylation critical for the nucleolar RNA exosome function in rRNA processing. Binds to pre-rRNAs. This chain is Ubiquitin carboxyl-terminal hydrolase 36, found in Homo sapiens (Human).